A 222-amino-acid polypeptide reads, in one-letter code: MKIYYLFFVLIYLIYFINLVYCEKNDTSIILDDILDIQHNRKLFPKITHQDIENIRQIRRMNLHSIVKSMSTLNVQDLGLGIFAGLEKSVNPNPNECIDSLRTSIDNTNQVFYDISNFFGITIQEFLTLIQIFPTIIKDDIRLYDACGANVIVMKIGKFAHIIRTEGLQSFANYAKNALYSNPFYLIPVTRGLLESLVTKNYQMLGVHIGEYLGILFNSDDD.

The N-terminal stretch at 1–22 is a signal peptide; it reads MKIYYLFFVLIYLIYFINLVYC. N25 is a glycosylation site (N-linked (GlcNAc...) asparagine).

Belongs to the Sct family.

The protein resides in the secreted. The polypeptide is Secreted protein D (Dictyostelium discoideum (Social amoeba)).